The following is a 396-amino-acid chain: Cyclic GMP-AMP synthase-like receptor (396 aa).

ATP contacts are provided by residues serine 63 and 75–77 (EFD). Residues glutamate 75, aspartate 77, and aspartate 194 each contribute to the Mg(2+) site. Aspartate 194 provides a ligand contact to GTP. ATP contacts are provided by residues 241–244 (QEQE), lysine 262, and 275–279 (SYYLK). 3 residues coordinate Mn(2+): valine 286, glutamate 287, and aspartate 292. Residues 376–396 (IMNGGNPQQSANAENGSCLSM) form a disordered region. Polar residues predominate over residues 380–396 (GNPQQSANAENGSCLSM).

Belongs to the mab-21 family. Mg(2+) is required as a cofactor. Requires Mn(2+) as cofactor.

It catalyses the reaction GTP + ATP = 2',3'-cGAMP + 2 diphosphate. It carries out the reaction GTP + ATP = pppGp(2'-5')A + diphosphate. The catalysed reaction is pppGp(2'-5')A = 2',3'-cGAMP + diphosphate. Functionally, nucleotidyltransferase that catalyzes the formation of cyclic GMP-AMP (2',3'-cGAMP) from ATP and GTP and plays a key role in innate immunity. Acts as a key sensor of double-stranded RNA (dsRNA), the presence of dsRNA in the cytoplasm being a danger signal that triggers the immune responses. Directly binds dsRNA, activating the nucleotidyltransferase activity, leading to synthesis of 2',3'-cGAMP, a second messenger that binds to and activates Sting, thereby triggering the immune response via activation of the NF-kappa-B transcription factor. The polypeptide is Cyclic GMP-AMP synthase-like receptor (Aethina tumida (Small hive beetle)).